Here is a 224-residue protein sequence, read N- to C-terminus: Ribose-5-phosphate isomerase A (224 aa).

Residues 32 to 35 (TGST), 85 to 88 (DGAD), and 98 to 101 (KGGG) each bind substrate. The Proton acceptor role is filled by glutamate 107. Lysine 125 contributes to the substrate binding site.

The protein belongs to the ribose 5-phosphate isomerase family. As to quaternary structure, homodimer.

The catalysed reaction is aldehydo-D-ribose 5-phosphate = D-ribulose 5-phosphate. It participates in carbohydrate degradation; pentose phosphate pathway; D-ribose 5-phosphate from D-ribulose 5-phosphate (non-oxidative stage): step 1/1. Functionally, catalyzes the reversible conversion of ribose-5-phosphate to ribulose 5-phosphate. In Pseudomonas putida (strain ATCC 700007 / DSM 6899 / JCM 31910 / BCRC 17059 / LMG 24140 / F1), this protein is Ribose-5-phosphate isomerase A.